The primary structure comprises 817 residues: LPS-assembly protein LptD (817 aa).

The signal sequence occupies residues M1–A26. A disordered region spans residues M1–R101. Positions G13–A90 are enriched in low complexity.

This sequence belongs to the LptD family. Component of the lipopolysaccharide transport and assembly complex. Interacts with LptE and LptA.

The protein resides in the cell outer membrane. In terms of biological role, together with LptE, is involved in the assembly of lipopolysaccharide (LPS) at the surface of the outer membrane. The protein is LPS-assembly protein LptD of Azoarcus sp. (strain BH72).